We begin with the raw amino-acid sequence, 1070 residues long: Inactive tyrosine-protein kinase 7 (1070 aa).

Residues Met1 to Thr30 form the signal peptide. Ig-like C2-type domains follow at residues Ala31 to Asn120, Pro128 to Ser218, Ala225 to Leu317, Pro309 to Thr407, Pro412 to Gln497, Lys503 to Leu586, and Gly578 to Tyr680. Residues Ala31–Thr704 lie on the Extracellular side of the membrane. Cys53 and Cys101 are joined by a disulfide. Residues Asn116, Asn175, Asn184, Asn214, Asn268, and Asn283 are each glycosylated (N-linked (GlcNAc...) asparagine). Cys150 and Cys200 are oxidised to a cystine. 2 cysteine pairs are disulfide-bonded: Cys246–Cys301 and Cys343–Cys391. N-linked (GlcNAc...) asparagine glycans are attached at residues Asn405, Asn463, Asn567, and Asn646. 3 disulfide bridges follow: Cys433-Cys481, Cys524-Cys570, and Cys613-Cys664. A helical transmembrane segment spans residues Ile705 to Tyr725. Over Cys726–Pro1070 the chain is Cytoplasmic. Disordered stretches follow at residues Gln736 to Pro759 and Gly773 to Arg793. Residues Ser794–Pro1070 form an interaction with CTNNB1 region. The 271-residue stretch at Leu796–Val1066 folds into the Protein kinase; inactive domain. Residue Ser1064 is modified to Phosphoserine.

The protein belongs to the protein kinase superfamily. Tyr protein kinase family. Insulin receptor subfamily. As to quaternary structure, interacts with CTNNB1. In terms of processing, MMP14 cleaves PTK7 between Pro-621 and Leu-622 generating an N-terminal soluble (70 kDa) fragment and a membrane C-terminal (50 kDa) fragment. Proteolysis by MMP14 regulates PTK7 function in non-canonical Wnt signaling pathway. As to expression, highly expressed in lung, liver, pancreas, kidney, placenta and melanocytes. Weakly expressed in thyroid gland, ovary, brain, heart and skeletal muscle. Also expressed in erythroleukemia cells. But not expressed in colon.

Its subcellular location is the membrane. The protein resides in the cell junction. In terms of biological role, inactive tyrosine kinase involved in Wnt signaling pathway. Component of both the non-canonical (also known as the Wnt/planar cell polarity signaling) and the canonical Wnt signaling pathway. Functions in cell adhesion, cell migration, cell polarity, proliferation, actin cytoskeleton reorganization and apoptosis. Has a role in embryogenesis, epithelial tissue organization and angiogenesis. The chain is Inactive tyrosine-protein kinase 7 (PTK7) from Homo sapiens (Human).